The following is a 416-amino-acid chain: Peroxisomal isocitrate dehydrogenase [NADP] (416 aa).

NADP(+) contacts are provided by residues 77–79 and arginine 84; that span reads TIT. Threonine 79 provides a ligand contact to substrate. Residues 96–102, arginine 111, and arginine 134 contribute to the substrate site; that span reads SPNGTIR. Aspartate 253 is a binding site for Mn(2+). Residue lysine 261 coordinates NADP(+). Aspartate 276 contacts Mn(2+). NADP(+) contacts are provided by residues 311-316 and asparagine 329; that span reads GTVTRH. Positions 414 to 416 match the Peroxisomal targeting signal motif; the sequence is SRL.

The protein belongs to the isocitrate and isopropylmalate dehydrogenases family. The cofactor is Mg(2+). Mn(2+) is required as a cofactor.

Its subcellular location is the peroxisome. It carries out the reaction D-threo-isocitrate + NADP(+) = 2-oxoglutarate + CO2 + NADPH. Its function is as follows. May be involved in response to oxidative stresses. This Arabidopsis thaliana (Mouse-ear cress) protein is Peroxisomal isocitrate dehydrogenase [NADP] (ICDH).